A 238-amino-acid polypeptide reads, in one-letter code: UDP-2,3-diacylglucosamine hydrolase (238 aa).

Mn(2+) is bound by residues aspartate 8, histidine 10, aspartate 41, asparagine 78, and histidine 113. Substrate is bound at residue 78–79 (NR). Substrate-binding residues include aspartate 121, serine 159, asparagine 163, lysine 166, and histidine 194. The Mn(2+) site is built by histidine 194 and histidine 196.

Belongs to the LpxH family. Requires Mn(2+) as cofactor.

Its subcellular location is the cell inner membrane. The enzyme catalyses UDP-2-N,3-O-bis[(3R)-3-hydroxytetradecanoyl]-alpha-D-glucosamine + H2O = 2-N,3-O-bis[(3R)-3-hydroxytetradecanoyl]-alpha-D-glucosaminyl 1-phosphate + UMP + 2 H(+). The protein operates within glycolipid biosynthesis; lipid IV(A) biosynthesis; lipid IV(A) from (3R)-3-hydroxytetradecanoyl-[acyl-carrier-protein] and UDP-N-acetyl-alpha-D-glucosamine: step 4/6. Its function is as follows. Hydrolyzes the pyrophosphate bond of UDP-2,3-diacylglucosamine to yield 2,3-diacylglucosamine 1-phosphate (lipid X) and UMP by catalyzing the attack of water at the alpha-P atom. Involved in the biosynthesis of lipid A, a phosphorylated glycolipid that anchors the lipopolysaccharide to the outer membrane of the cell. This Shewanella piezotolerans (strain WP3 / JCM 13877) protein is UDP-2,3-diacylglucosamine hydrolase.